The sequence spans 1294 residues: Phosphoribosylformylglycinamidine synthase (1294 aa).

The disordered stretch occupies residues 303–325; it reads WPGAATGSGGEIRDEGATGRGSK. Residues 305–316, 384–386, and A676 contribute to the ATP site; these read GAATGSGGEIRD and TGY. D677, E716, N720, and D883 together coordinate Mg(2+). S885 is an ATP binding site. Residues 1041-1294 enclose the Glutamine amidotransferase type-1 domain; the sequence is VAVLREQGVN…MFRNARRQLG (254 aa). The active-site Nucleophile is the C1134. Residues H1259 and E1261 contribute to the active site.

It in the N-terminal section; belongs to the FGAMS family. As to quaternary structure, monomer.

It localises to the cytoplasm. The enzyme catalyses N(2)-formyl-N(1)-(5-phospho-beta-D-ribosyl)glycinamide + L-glutamine + ATP + H2O = 2-formamido-N(1)-(5-O-phospho-beta-D-ribosyl)acetamidine + L-glutamate + ADP + phosphate + H(+). It functions in the pathway purine metabolism; IMP biosynthesis via de novo pathway; 5-amino-1-(5-phospho-D-ribosyl)imidazole from N(2)-formyl-N(1)-(5-phospho-D-ribosyl)glycinamide: step 1/2. Phosphoribosylformylglycinamidine synthase involved in the purines biosynthetic pathway. Catalyzes the ATP-dependent conversion of formylglycinamide ribonucleotide (FGAR) and glutamine to yield formylglycinamidine ribonucleotide (FGAM) and glutamate. This Pectobacterium atrosepticum (strain SCRI 1043 / ATCC BAA-672) (Erwinia carotovora subsp. atroseptica) protein is Phosphoribosylformylglycinamidine synthase.